Here is a 457-residue protein sequence, read N- to C-terminus: DDB1- and CUL4-associated factor 10 (457 aa).

WD repeat units follow at residues 65-104 (RTHGAVFNLEYSPDGSVLTVACEQTEVLLFDPVSSKHIKT), 108-146 (AHEDCVNNIRFLDNRMFATCSDDTTIALWDLRKLNSKVC), 150-189 (GHTSWVKNIEYDTNTRLLVTSGFDGNVIIWDTNRCTEDGC), and 195-234 (FHTRFLMRMRLTPDCSKMLISTSSGYLLILHELDLTKSLE). Residues 246–265 (TASTSDMTSTSSDTRPSSSP) show a composition bias toward low complexity. The disordered stretch occupies residues 246 to 304 (TASTSDMTSTSSDTRPSSSPCHNSDLGPLFEKHMSRSSQREGASPRNSLEVLTPEVPGE). Positions 281–292 (RSSQREGASPRN) are enriched in polar residues. 3 WD repeats span residues 306 to 346 (DRGN…QEGA), 368 to 406 (VGRGYIKELCFSPDGRMIASPYAYGIRLLGFDSQCKELV), and 424 to 457 (SHKDVVLTTKFSPTHCQIASGCLSGRVTLYQPKF).

It belongs to the WD repeat DCAF10 family.

It functions in the pathway protein modification; protein ubiquitination. Its function is as follows. May function as a substrate receptor for CUL4-DDB1 E3 ubiquitin-protein ligase complex. In Xenopus tropicalis (Western clawed frog), this protein is DDB1- and CUL4-associated factor 10 (dcaf10).